Reading from the N-terminus, the 997-residue chain is Translation initiation factor IF-2 (997 aa).

The interval 101 to 406 (ELAAEQAAAR…SRNQHQDRRH (306 aa)) is disordered. Composition is skewed to low complexity over residues 116–185 (AEAV…QAEP) and 195–209 (AAPA…EPAK). The span at 231-242 (TELTSQTPTPVA) shows a compositional bias: polar residues. Residues 256-280 (AEPAAAPKTTAKPGEIRRAAAPAAP) are compositionally biased toward low complexity. Basic and acidic residues predominate over residues 281–292 (DRAREEARRAAE). Gly residues predominate over residues 385–394 (RAGGKGGRGG). One can recognise a tr-type G domain in the interval 498 to 665 (PRAPVVTVMG…NVLLQAEILE (168 aa)). Positions 507–514 (GHVDHGKT) are G1. 507-514 (GHVDHGKT) lines the GTP pocket. Positions 532–536 (GITQH) are G2. A G3 region spans residues 553–556 (DTPG). GTP contacts are provided by residues 553–557 (DTPGH) and 607–610 (NKID). The segment at 607 to 610 (NKID) is G4. Residues 643 to 645 (SAK) form a G5 region.

The protein belongs to the TRAFAC class translation factor GTPase superfamily. Classic translation factor GTPase family. IF-2 subfamily.

It is found in the cytoplasm. In terms of biological role, one of the essential components for the initiation of protein synthesis. Protects formylmethionyl-tRNA from spontaneous hydrolysis and promotes its binding to the 30S ribosomal subunits. Also involved in the hydrolysis of GTP during the formation of the 70S ribosomal complex. This chain is Translation initiation factor IF-2, found in Bordetella pertussis (strain Tohama I / ATCC BAA-589 / NCTC 13251).